A 200-amino-acid polypeptide reads, in one-letter code: GTP-binding protein rho5 (200 aa).

Gly13–Thr20 is a GTP binding site. The Effector region signature appears at Tyr35–Tyr43. GTP is bound by residues Asp60 to Gln64 and Cys118 to Asp121. Cysteine methyl ester is present on Cys197. Cys197 carries the S-geranylgeranyl cysteine lipid modification. The propeptide at Ile198–Leu200 is removed in mature form.

The protein belongs to the small GTPase superfamily. Rho family.

It localises to the cell membrane. The sequence is that of GTP-binding protein rho5 (rho5) from Schizosaccharomyces pombe (strain 972 / ATCC 24843) (Fission yeast).